The chain runs to 365 residues: Histidinol-phosphate aminotransferase (365 aa).

Residue Lys-221 is modified to N6-(pyridoxal phosphate)lysine.

It belongs to the class-II pyridoxal-phosphate-dependent aminotransferase family. Histidinol-phosphate aminotransferase subfamily. Homodimer. The cofactor is pyridoxal 5'-phosphate.

It catalyses the reaction L-histidinol phosphate + 2-oxoglutarate = 3-(imidazol-4-yl)-2-oxopropyl phosphate + L-glutamate. The protein operates within amino-acid biosynthesis; L-histidine biosynthesis; L-histidine from 5-phospho-alpha-D-ribose 1-diphosphate: step 7/9. This is Histidinol-phosphate aminotransferase from Nitrobacter hamburgensis (strain DSM 10229 / NCIMB 13809 / X14).